We begin with the raw amino-acid sequence, 455 residues long: Exodeoxyribonuclease 7 large subunit (455 aa).

The protein belongs to the XseA family. Heterooligomer composed of large and small subunits.

It localises to the cytoplasm. The enzyme catalyses Exonucleolytic cleavage in either 5'- to 3'- or 3'- to 5'-direction to yield nucleoside 5'-phosphates.. Its function is as follows. Bidirectionally degrades single-stranded DNA into large acid-insoluble oligonucleotides, which are then degraded further into small acid-soluble oligonucleotides. The sequence is that of Exodeoxyribonuclease 7 large subunit from Escherichia fergusonii (strain ATCC 35469 / DSM 13698 / CCUG 18766 / IAM 14443 / JCM 21226 / LMG 7866 / NBRC 102419 / NCTC 12128 / CDC 0568-73).